The following is a 70-amino-acid chain: Large ribosomal subunit protein uL29 (70 aa).

It belongs to the universal ribosomal protein uL29 family.

This is Large ribosomal subunit protein uL29 from Prochlorococcus marinus (strain NATL1A).